A 395-amino-acid polypeptide reads, in one-letter code: L-methionine gamma-lyase (395 aa).

Pyridoxal 5'-phosphate contacts are provided by residues 56–58 (YTR) and 86–87 (GM). Tyrosine 111 is a substrate binding site. 206-208 (SAT) provides a ligand contact to pyridoxal 5'-phosphate. Residue lysine 209 is modified to N6-(pyridoxal phosphate)lysine. Arginine 373 provides a ligand contact to substrate.

This sequence belongs to the trans-sulfuration enzymes family. L-methionine gamma-lyase subfamily. As to quaternary structure, homotetramer. Requires pyridoxal 5'-phosphate as cofactor.

It carries out the reaction L-methionine + H2O = methanethiol + 2-oxobutanoate + NH4(+). The catalysed reaction is L-homocysteine + H2O = 2-oxobutanoate + hydrogen sulfide + NH4(+) + H(+). The enzyme catalyses L-cysteine + H2O = hydrogen sulfide + pyruvate + NH4(+) + H(+). Catalyzes the alpha,gamma-elimination of L-methionine to produce methanethiol, 2-oxobutanoate and ammonia, and that of L-homocysteine. Can also use L-cysteine as substrate, catalyzing its alpha,beta-elimination; this activity seems to only minimally contribute to the production of hydrogen sulfide (H2S) by F.nucleatum in the oral cavity, which is toxic for a large variety of cells in periodontal regions. This is L-methionine gamma-lyase from Fusobacterium nucleatum subsp. nucleatum (strain ATCC 25586 / DSM 15643 / BCRC 10681 / CIP 101130 / JCM 8532 / KCTC 2640 / LMG 13131 / VPI 4355).